We begin with the raw amino-acid sequence, 390 residues long: NADH-quinone oxidoreductase subunit D (390 aa).

The protein belongs to the complex I 49 kDa subunit family. As to quaternary structure, NDH-1 is composed of 14 different subunits. Subunits NuoB, C, D, E, F, and G constitute the peripheral sector of the complex.

The protein localises to the cell inner membrane. It carries out the reaction a quinone + NADH + 5 H(+)(in) = a quinol + NAD(+) + 4 H(+)(out). NDH-1 shuttles electrons from NADH, via FMN and iron-sulfur (Fe-S) centers, to quinones in the respiratory chain. The immediate electron acceptor for the enzyme in this species is believed to be ubiquinone. Couples the redox reaction to proton translocation (for every two electrons transferred, four hydrogen ions are translocated across the cytoplasmic membrane), and thus conserves the redox energy in a proton gradient. This chain is NADH-quinone oxidoreductase subunit D, found in Geobacter metallireducens (strain ATCC 53774 / DSM 7210 / GS-15).